Reading from the N-terminus, the 351-residue chain is GTP 3',8-cyclase (351 aa).

One can recognise a Radical SAM core domain in the interval 29–254 (RFGRVARDLR…EHGREDPSAP (226 aa)). Residue arginine 38 coordinates GTP. [4Fe-4S] cluster-binding residues include cysteine 45 and cysteine 49. Tyrosine 51 provides a ligand contact to S-adenosyl-L-methionine. Cysteine 52 contributes to the [4Fe-4S] cluster binding site. Arginine 89 contacts GTP. An S-adenosyl-L-methionine-binding site is contributed by glycine 93. Residue threonine 120 participates in GTP binding. An S-adenosyl-L-methionine-binding site is contributed by serine 144. Lysine 181 is a GTP binding site. Methionine 214 provides a ligand contact to S-adenosyl-L-methionine. [4Fe-4S] cluster is bound by residues cysteine 278 and cysteine 281. 283–285 (RTR) contributes to the GTP binding site. Cysteine 295 is a binding site for [4Fe-4S] cluster.

The protein belongs to the radical SAM superfamily. MoaA family. In terms of assembly, monomer and homodimer. It depends on [4Fe-4S] cluster as a cofactor.

It catalyses the reaction GTP + AH2 + S-adenosyl-L-methionine = (8S)-3',8-cyclo-7,8-dihydroguanosine 5'-triphosphate + 5'-deoxyadenosine + L-methionine + A + H(+). Its pathway is cofactor biosynthesis; molybdopterin biosynthesis. In terms of biological role, catalyzes the cyclization of GTP to (8S)-3',8-cyclo-7,8-dihydroguanosine 5'-triphosphate. In Rhodococcus opacus (strain B4), this protein is GTP 3',8-cyclase.